We begin with the raw amino-acid sequence, 412 residues long: Eukaryotic initiation factor 4A-1 (412 aa).

At A2 the chain carries N-acetylalanine. Residues 39–67 (ESFDAMGLQENLLRGIYAYGFEKPSAIQQ) carry the Q motif motif. The region spanning 70–240 (IVPFCKGLDV…RKFMSKPVRI (171 aa)) is the Helicase ATP-binding domain. Residue 83–90 (AQSGTGKT) coordinates ATP. S104 carries the post-translational modification Phosphoserine. Residue T145 is modified to Phosphothreonine. The short motif at 188–191 (DEAD) is the DEAD box element. The Helicase C-terminal domain occupies 251-412 (GIKQFYVNVE…ELPSNVADLL (162 aa)).

This sequence belongs to the DEAD box helicase family. eIF4A subfamily. In terms of assembly, eIF4F is a multi-subunit complex, the composition of which varies with external and internal environmental conditions. It is composed of at least EIF4A, EIF4E and EIF4G. Interacts with CDKA-1. Interacts with MRF1, MRF2, MRF3/ECIP1 and MRF4. In terms of tissue distribution, highly expressed in the whole plant.

It localises to the cytoplasm. The enzyme catalyses ATP + H2O = ADP + phosphate + H(+). Its function is as follows. ATP-dependent RNA helicase which is a subunit of the eIF4F complex involved in cap recognition and is required for mRNA binding to ribosome. In the current model of translation initiation, eIF4A unwinds RNA secondary structures in the 5'-UTR of mRNAs which is necessary to allow efficient binding of the small ribosomal subunit, and subsequent scanning for the initiator codon. This is Eukaryotic initiation factor 4A-1 from Arabidopsis thaliana (Mouse-ear cress).